We begin with the raw amino-acid sequence, 479 residues long: MLFWHTQPEHYNQHNSGSYLRDVLALPIFKQEEPQLSPENGARLPPLQYVLCAATSPAVKLHEETLTYLNQGQSYEIRLLENRKLGDFQDLNTKYVKSIIRVVFHDRRLQYTEYQQLEGWRWSRPGDRILDIDIPLSVGILDPRASPTQLNAVEFLWDPSKRASAFIQVHCISTEFTPRKHGGEKGVPFRVQIDTFKQNESGDYSEHLHSASCQIKVFKPKGADRKQKTDREKMEKRTAQEKEKYQPSYETTILTECSPWPDVPYQANNTPSPSYNGSPNSFGLREGNSSPNHPVEPLPLGSDHLLPSASIQDAQQWLHRNRFSQFCWLFASFSGADLLKMSRDDLVQVCGPADGIRLFNAIKGRNVRPKMTIYVCQELEQNQLPLPQKQDDSGDNSLCVYHAIFLEELTTLELTEKIASLYSIPPQHIHRVYRQGPAGIHVVVSNEMVQNFQDESCFILSTLKAESNDGYHIILKCGL.

The mediate transcriptional repression stretch occupies residues 1–52 (MLFWHTQPEHYNQHNSGSYLRDVLALPIFKQEEPQLSPENGARLPPLQYVLC). Residues 43–280 (RLPPLQYVLC…PSPSYNGSPN (238 aa)) form the Grh/CP2 DB domain. Disordered regions lie at residues 219–248 (KPKG…YQPS) and 260–301 (WPDV…LPLG). A compositionally biased stretch (basic and acidic residues) spans 221-245 (KGADRKQKTDREKMEKRTAQEKEKY). The SAM2-like domain stretch occupies residues 261–365 (PDVPYQANNT…IRLFNAIKGR (105 aa)). The span at 266–292 (QANNTPSPSYNGSPNSFGLREGNSSPN) shows a compositional bias: polar residues.

The protein belongs to the grh/CP2 family. CP2 subfamily. As to quaternary structure, forms homohexamers via its SAM-like domain. Interacts with Mta1; which is indispensable for Tfcp2l1-mediated self-renewal-promoting effect and endoderm-inhibiting action. As to expression, highly expressed in placenta, testis, small intestine, kidney and stomach. Low levels of expression in lung, mesenteric lymph nodes, muscle, ovary, and thymus. No expression was detected in brain, heart, liver, and spleen. Expressed in eccrine glands in the palm. Expression is prominent in both kidney collecting ducts intercalated (IC) and principal (PC) cells. Also expressed in the thick limb of Henle and connecting segments of the nephron.

Its subcellular location is the nucleus. Transcription factor that facilitates establishment and maintenance of pluripotency in embryonic stem cells (ESCs). With Klf2, acts as the major effector of self-renewal that mediates induction of pluripotency downstream of LIF/Stat3 and Wnt/beta-catenin signaling. Required for normal duct development in the salivary gland and kidney. Coordinates the development of the kidney collecting ducts intercalated (IC) and principal (PC) cells, which regulate acid-base and salt-water homeostasis, respectively. Regulates the expression of IC genes including subunits B1 and D2 of the V-ATPase complex, Oxgr1, Ca12, Slc4a1, Aqp6 and IC-specific transcription factor Foxi1. Also regulates the expression of Jag1 and subsequent notch signaling in the collecting duct. Jag1 initiates notch signaling in PCs but inhibits notch signaling in ICs. Acts as a transcriptional suppressor that may suppress UBP1-mediated transcriptional activation. Modulates the placental expression of CYP11A1. This is Transcription factor CP2-like protein 1 (Tfcp2l1) from Mus musculus (Mouse).